The sequence spans 176 residues: UBA-like domain-containing protein 1 (176 aa).

The segment at 87 to 176 (SESFHGGGGS…RAHPAMEAER (90 aa)) is disordered. The span at 120 to 137 (TPSWPTAASPPGGPQQHQ) shows a compositional bias: low complexity. Over residues 138–150 (PQPPLWTPAPPSP) the composition is skewed to pro residues. A compositionally biased stretch (basic and acidic residues) spans 166-176 (PRAHPAMEAER).

This sequence belongs to the UBALD family.

This chain is UBA-like domain-containing protein 1 (Ubald1), found in Mus musculus (Mouse).